Consider the following 94-residue polypeptide: Small ribosomal subunit protein bS16 (94 aa).

This sequence belongs to the bacterial ribosomal protein bS16 family.

This chain is Small ribosomal subunit protein bS16, found in Thermosipho africanus (strain TCF52B).